We begin with the raw amino-acid sequence, 274 residues long: Capsid protein (274 aa).

Residues 88 to 113 are disordered; that stretch reads RPAKQVLKGSSSKSQQRDEGEVVFTR. Residues 102–113 are compositionally biased toward basic and acidic residues; it reads QQRDEGEVVFTR.

The protein localises to the virion. Functionally, capsid protein self-assembles to form a capsid about 33 nm in diameter. The capsid encapsulates two genomic RNAs as well as a third, subgenomic RNA (RNA3) (Potential). This Raspberry bushy dwarf virus (isolate Malling Jewel raspberry/R15) (RBDV) protein is Capsid protein.